Consider the following 278-residue polypeptide: Coiled-coil domain-containing protein 106 (278 aa).

A coiled-coil region spans residues 61–99 (AQLHLALERNSWLQKRIEDLEEERDFLRCQLDKFISSAR). Positions 102–119 (ADDHCRGKPGPRRAEGDG) are enriched in basic and acidic residues. A disordered region spans residues 102 to 174 (ADDHCRGKPG…KPKARERQRV (73 aa)). S128 is subject to Phosphoserine. Low complexity predominate over residues 131 to 144 (ESAASSLSGASEEG). Basic residues predominate over residues 150-166 (KRQKQKGGPGRRRFGKP). Positions 151–164 (RQKQKGGPGRRRFG) match the Bipartite nuclear localization signal motif.

In terms of assembly, interacts with p53/TP53.

It localises to the nucleus. Its function is as follows. Promotes the degradation of p53/TP53 protein and inhibits its transactivity. This chain is Coiled-coil domain-containing protein 106 (CCDC106), found in Bos taurus (Bovine).